A 319-amino-acid chain; its full sequence is Transaldolase (319 aa).

Lys-125 serves as the catalytic Schiff-base intermediate with substrate.

The protein belongs to the transaldolase family. Type 1 subfamily. As to quaternary structure, homodimer.

Its subcellular location is the cytoplasm. The catalysed reaction is D-sedoheptulose 7-phosphate + D-glyceraldehyde 3-phosphate = D-erythrose 4-phosphate + beta-D-fructose 6-phosphate. It participates in carbohydrate degradation; pentose phosphate pathway; D-glyceraldehyde 3-phosphate and beta-D-fructose 6-phosphate from D-ribose 5-phosphate and D-xylulose 5-phosphate (non-oxidative stage): step 2/3. In terms of biological role, transaldolase is important for the balance of metabolites in the pentose-phosphate pathway. This Ralstonia pickettii (strain 12J) protein is Transaldolase.